Consider the following 34-residue polypeptide: Omega-ctenitoxin-Pn2a (34 aa).

Cystine bridges form between cysteine 2-cysteine 16, cysteine 9-cysteine 26, and cysteine 15-cysteine 28.

It belongs to the neurotoxin 02 (plectoxin) family. 01 (Tx3) subfamily. As to expression, expressed by the venom gland.

The protein resides in the secreted. Inhibits all known high-voltage activated calcium channels (L-, P/Q- and R-type currents) (Cav), and most effectively the P/Q- (Cav2.1/CACNA1A) and R-type (Cav2.3/CACNA1E) currents. In rat brain, inhibits glutamate release, neuronal death and loss of neurotransmission in the hippocampus resulting from ischemia. In vivo, induces rapid general flaccid paralysis followed by death in 10-30 minutes at dose levels of 5 ug per mouse. The chain is Omega-ctenitoxin-Pn2a from Phoneutria nigriventer (Brazilian armed spider).